We begin with the raw amino-acid sequence, 211 residues long: MISYYFQGFALGAAMILPLGPQNAFVMNQGIRRQYHLMIALLCALSDLVLISAGIFGGSALLMQSPWLLALVTWGGVAFLLWYGFGALKTAMSSNLELASAEVMKRGRWKIIATMLAVTWLNPHVYLDTFVVLGSLGGQLAMEPKRWFALGTISASFLWFFGLALLAAWLAPRLRTAKAQRIINILVGVVMWLIAFQLAREGVAHMHALFN.

A run of 6 helical transmembrane segments spans residues 1 to 21, 37 to 57, 68 to 88, 111 to 131, 147 to 167, and 179 to 199; these read MISYYFQGFALGAAMILPLGP, LMIALLCALSDLVLISAGIFG, LLALVTWGGVAFLLWYGFGAL, IIATMLAVTWLNPHVYLDTFV, WFALGTISASFLWFFGLALLA, and AQRIINILVGVVMWLIAFQLA.

It belongs to the LysE/ArgO transporter (TC 2.A.75) family.

It localises to the cell inner membrane. The enzyme catalyses L-arginine(in) = L-arginine(out). Its function is as follows. Involved in the export of arginine. Important to control the intracellular level of arginine and the correct balance between arginine and lysine. This chain is Arginine exporter protein ArgO, found in Salmonella newport (strain SL254).